A 566-amino-acid chain; its full sequence is Arginine--tRNA ligase (566 aa).

The short motif at 123 to 133 (PNIAKPFHIGH) is the 'HIGH' region element.

The protein belongs to the class-I aminoacyl-tRNA synthetase family. Monomer.

The protein localises to the cytoplasm. The enzyme catalyses tRNA(Arg) + L-arginine + ATP = L-arginyl-tRNA(Arg) + AMP + diphosphate. The protein is Arginine--tRNA ligase of Clostridioides difficile (strain 630) (Peptoclostridium difficile).